Reading from the N-terminus, the 463-residue chain is Annexin A7 (463 aa).

Over residues 1–18 (MSYPGYPPTGYPPFPGYP) the composition is skewed to pro residues. Disordered stretches follow at residues 1–34 (MSYPGYPPTGYPPFPGYPPAGQESSFPTAGQYPY) and 77–149 (SPGG…MTQG). The segment at 1–143 (MSYPGYPPTG…GGQAPYPSQP (143 aa)) is repeat-rich region. The segment at 5 to 20 (GYPPTGYPPFPGYPPA) is 3 X 5 AA tandem repeats of G-Y-P-P-X. Gly residues predominate over residues 86-99 (GGQGFGAPPGGAGF). 4 Annexin repeats span residues 160-231 (FDAM…ALFM), 232-303 (PSTY…SMCQ), 315-387 (QMAQ…TILQ), and 391-462 (NRPA…AIVG). Lys208 is modified (N6-acetyllysine).

This sequence belongs to the annexin family. Interacts with PDCD6.

Calcium/phospholipid-binding protein which promotes membrane fusion and is involved in exocytosis. The chain is Annexin A7 (Anxa7) from Mus musculus (Mouse).